Reading from the N-terminus, the 259-residue chain is Small ribosomal subunit protein eS1 (259 aa).

Disordered stretches follow at residues 1 to 23 and 235 to 259; these read MAVG…KTAD and ESKS…VDSV. Basic residues predominate over residues 8–19; sequence KVTKGGKKGGKK. Residues 246 to 259 are compositionally biased toward basic and acidic residues; that stretch reads SRPDHYEPPKVDSV.

Belongs to the eukaryotic ribosomal protein eS1 family. In terms of assembly, component of the small ribosomal subunit. Mature ribosomes consist of a small (40S) and a large (60S) subunit. The 40S subunit contains about 33 different proteins and 1 molecule of RNA (18S). The 60S subunit contains about 49 different proteins and 3 molecules of RNA (28S, 5.8S and 5S).

The protein resides in the cytoplasm. This Schistosoma japonicum (Blood fluke) protein is Small ribosomal subunit protein eS1.